Here is a 185-residue protein sequence, read N- to C-terminus: Large ribosomal subunit protein uL5 (185 aa).

This sequence belongs to the universal ribosomal protein uL5 family. In terms of assembly, part of the 50S ribosomal subunit; part of the 5S rRNA/L5/L18/L25 subcomplex. Contacts the 5S rRNA and the P site tRNA. Forms a bridge to the 30S subunit in the 70S ribosome.

In terms of biological role, this is one of the proteins that bind and probably mediate the attachment of the 5S RNA into the large ribosomal subunit, where it forms part of the central protuberance. In the 70S ribosome it contacts protein S13 of the 30S subunit (bridge B1b), connecting the 2 subunits; this bridge is implicated in subunit movement. Contacts the P site tRNA; the 5S rRNA and some of its associated proteins might help stabilize positioning of ribosome-bound tRNAs. This is Large ribosomal subunit protein uL5 from Rhizobium rhizogenes (strain K84 / ATCC BAA-868) (Agrobacterium radiobacter).